The sequence spans 138 residues: Acidic phospholipase A2 homolog sistruxin A (138 aa).

The first 37 residues, 1 to 37 (MRALWIVAVLLLGVEGSLVEFETLIMKIAGRSGVWYY), serve as a signal peptide directing secretion. 7 cysteine pairs are disulfide-bonded: Cys-42–Cys-131, Cys-44–Cys-60, Cys-59–Cys-111, Cys-65–Cys-138, Cys-66–Cys-104, Cys-73–Cys-97, and Cys-91–Cys-102. Residues 78–83 (DVYTYR) constitute a propeptide that is removed on maturation. Pyrrolidone carboxylic acid is present on Gln-84. The propeptide occupies 119-124 (YNHKYW).

This sequence belongs to the phospholipase A2 family. Group II subfamily. D49 sub-subfamily. Heterodimer of an acidic subunit and a basic chain. The acidic subunit is non-toxic, without enzymatic activity and comprises 3 peptides that are cross-linked by 7 disulfide bridges. The basic subunit is toxic, has phospholipase A2 activity and is composed of a single chain. Expressed by the venom gland.

The protein localises to the secreted. Functionally, snake venom phospholipase A2 (PLA2) that inhibits neuromuscular transmission by blocking acetylcholine release from the nerve termini. The polypeptide is Acidic phospholipase A2 homolog sistruxin A (Sistrurus tergeminus (Western massasauga)).